Here is a 185-residue protein sequence, read N- to C-terminus: Ribosome-recycling factor (185 aa).

It belongs to the RRF family.

Its subcellular location is the cytoplasm. Its function is as follows. Responsible for the release of ribosomes from messenger RNA at the termination of protein biosynthesis. May increase the efficiency of translation by recycling ribosomes from one round of translation to another. The chain is Ribosome-recycling factor from Corynebacterium kroppenstedtii (strain DSM 44385 / JCM 11950 / CIP 105744 / CCUG 35717).